The following is a 141-amino-acid chain: Myosin regulatory light chain cdc4 (141 aa).

2 positions are modified to phosphoserine: Ser2 and Ser6. 3 consecutive EF-hand domains span residues 3–38, 74–109, and 109–141; these read TDDS…CGQN, GDPE…LGEK, and KLSN…ILAN. Asp87, Asp89, Thr91, Met93, and Glu98 together coordinate Ca(2+).

As to quaternary structure, binds to myosin II chains myo2 and myo3. Interacts with vps27 and a PI 4-kinase pik1. Phosphorylated on either Ser-2 or Ser-6 but not both. Phosphorylation is not essential for the function of the protein.

It localises to the cytoplasm. Involved in cytokinesis. Required for the formation and function of the contractile ring. The chain is Myosin regulatory light chain cdc4 (cdc4) from Schizosaccharomyces pombe (strain 972 / ATCC 24843) (Fission yeast).